Consider the following 217-residue polypeptide: Probable transaldolase (217 aa).

The Schiff-base intermediate with substrate role is filled by Lys83.

It belongs to the transaldolase family. Type 3B subfamily.

The protein localises to the cytoplasm. The catalysed reaction is D-sedoheptulose 7-phosphate + D-glyceraldehyde 3-phosphate = D-erythrose 4-phosphate + beta-D-fructose 6-phosphate. It participates in carbohydrate degradation; pentose phosphate pathway; D-glyceraldehyde 3-phosphate and beta-D-fructose 6-phosphate from D-ribose 5-phosphate and D-xylulose 5-phosphate (non-oxidative stage): step 2/3. Transaldolase is important for the balance of metabolites in the pentose-phosphate pathway. This is Probable transaldolase (tal) from Methanocaldococcus jannaschii (strain ATCC 43067 / DSM 2661 / JAL-1 / JCM 10045 / NBRC 100440) (Methanococcus jannaschii).